A 239-amino-acid chain; its full sequence is Lactate utilization protein A 2 (239 aa).

The protein belongs to the LutA/YkgE family.

Is involved in L-lactate degradation and allows cells to grow with lactate as the sole carbon source. This chain is Lactate utilization protein A 2, found in Bacillus mycoides (strain KBAB4) (Bacillus weihenstephanensis).